The primary structure comprises 191 residues: dCTP deaminase, dUMP-forming (191 aa).

DCTP is bound by residues 101 to 106, Asp119, 127 to 129, Gln148, Tyr162, and Gln174; these read KSSLGR and TLE. Glu129 serves as the catalytic Proton donor/acceptor. The interval 169–191 is disordered; the sequence is SRYQGQRGPTASRSFQNFHRTQV. Polar residues predominate over residues 171–191; it reads YQGQRGPTASRSFQNFHRTQV.

It belongs to the dCTP deaminase family. Homotrimer.

It catalyses the reaction dCTP + 2 H2O = dUMP + NH4(+) + diphosphate. The protein operates within pyrimidine metabolism; dUMP biosynthesis; dUMP from dCTP: step 1/1. Bifunctional enzyme that catalyzes both the deamination of dCTP to dUTP and the hydrolysis of dUTP to dUMP without releasing the toxic dUTP intermediate. This chain is dCTP deaminase, dUMP-forming, found in Streptomyces griseus subsp. griseus (strain JCM 4626 / CBS 651.72 / NBRC 13350 / KCC S-0626 / ISP 5235).